An 84-amino-acid polypeptide reads, in one-letter code: SPbeta prophage-derived uncharacterized protein YomY (84 aa).

This Bacillus subtilis (strain 168) protein is SPbeta prophage-derived uncharacterized protein YomY (yomY).